The following is a 215-amino-acid chain: Adenylate kinase (215 aa).

10 to 15 (GAGKGT) serves as a coordination point for ATP. The interval 30–59 (STGDIFRANISGKTELGMKAKGYMDKGLLV) is NMP. AMP is bound by residues Thr31, Arg36, 57–59 (LLV), 85–88 (GFPR), and Gln92. The LID stretch occupies residues 126 to 163 (GRRVCSKCGASYHIEYNPTKVEGICDLCGSPVVQRKDD). Residue Arg127 participates in ATP binding. 2 residues coordinate Zn(2+): Cys130 and Cys133. 136 to 137 (SY) contributes to the ATP binding site. Cys150 and Cys153 together coordinate Zn(2+). Arg160 and Arg171 together coordinate AMP. Gln199 serves as a coordination point for ATP.

The protein belongs to the adenylate kinase family. As to quaternary structure, monomer.

It is found in the cytoplasm. The catalysed reaction is AMP + ATP = 2 ADP. It functions in the pathway purine metabolism; AMP biosynthesis via salvage pathway; AMP from ADP: step 1/1. Functionally, catalyzes the reversible transfer of the terminal phosphate group between ATP and AMP. Plays an important role in cellular energy homeostasis and in adenine nucleotide metabolism. This is Adenylate kinase from Clostridium acetobutylicum (strain ATCC 824 / DSM 792 / JCM 1419 / IAM 19013 / LMG 5710 / NBRC 13948 / NRRL B-527 / VKM B-1787 / 2291 / W).